Reading from the N-terminus, the 326-residue chain is ATPase GET3 (326 aa).

32–39 contacts ATP; that stretch reads KGGVGKTT. Aspartate 61 is a catalytic residue. ATP is bound by residues glutamate 244 and asparagine 271. Residues cysteine 282 and cysteine 285 each contribute to the Zn(2+) site.

The protein belongs to the arsA ATPase family. As to quaternary structure, homodimer.

It localises to the cytoplasm. The protein resides in the endoplasmic reticulum. In terms of biological role, ATPase required for the post-translational delivery of tail-anchored (TA) proteins to the endoplasmic reticulum. Recognizes and selectively binds the transmembrane domain of TA proteins in the cytosol. This complex then targets to the endoplasmic reticulum by membrane-bound receptors, where the tail-anchored protein is released for insertion. This process is regulated by ATP binding and hydrolysis. ATP binding drives the homodimer towards the closed dimer state, facilitating recognition of newly synthesized TA membrane proteins. ATP hydrolysis is required for insertion. Subsequently, the homodimer reverts towards the open dimer state, lowering its affinity for the membrane-bound receptor, and returning it to the cytosol to initiate a new round of targeting. The sequence is that of ATPase GET3 from Phaeosphaeria nodorum (strain SN15 / ATCC MYA-4574 / FGSC 10173) (Glume blotch fungus).